The primary structure comprises 798 residues: Peroxisome proliferator-activated receptor gamma coactivator 1-alpha (798 aa).

Position 79 is an N6-acetyllysine (Lys79). The tract at residues 100–140 is disordered; it reads PVDEDGLPSFDALTDGDVTTDNEASPSSMPDGTPPPQEAEE. Positions 116-129 are enriched in polar residues; that stretch reads DVTTDNEASPSSMP. The short motif at 144 to 148 is the LXXLL motif element; it reads LKKLL. N6-acetyllysine is present on Lys146. A Phosphothreonine; by AMPK modification is found at Thr178. Residue Lys184 is modified to N6-acetyllysine. Residues 213–277 form a disordered region; sequence YLTTNDDPPH…NDPKGSPFEN (65 aa). Basic and acidic residues predominate over residues 219-237; it reads DPPHTKPTENRNSSRDKCT. 4 positions are modified to N6-acetyllysine: Lys254, Lys271, Lys278, and Lys321. Residues 290 to 351 are disordered; sequence GTAGLTPPTT…NNSTKKGPEQ (62 aa). The interval 293 to 339 is interaction with PPARG; that stretch reads GLTPPTTPPHKANQDNPFRASPKLKSSCKTVVPPPSKKPRYSESSGT. The segment covering 334 to 346 has biased composition (polar residues); that stretch reads SESSGTQGNNSTK. An N6-acetyllysine mark is found at Lys347, Lys413, Lys442, and Lys451. The interval 350–798 is mediates interaction with RNF34; that stretch reads EQSELYAQLS…LKEAQRSLRR (449 aa). The residue at position 539 (Ser539) is a Phosphoserine; by AMPK. 3 disordered regions span residues 542-599, 613-639, and 650-669; these read SFNS…SSRS, HRNS…SYEE, and YRRE…ERQR. Positions 563-578 are enriched in basic residues; sequence QRMRSRSRSFSRHRSC. A compositionally biased stretch (low complexity) spans 579 to 599; it reads SRSPYSRSRSRSPGSRSSSRS. Residues 622–631 are compositionally biased toward basic residues; it reads SRSRSPYSRR. Residues 677-753 enclose the RRM domain; sequence RVIYVGKIRP…TDFELYFCGR (77 aa). 2 positions are modified to N6-acetyllysine: Lys758 and Lys779.

Homooligomer. Interacts with MYBBP1A; inhibits MYBBP1A transcriptional activation. Interacts with PRDM16, LPIN1 and PML. Interacts (via LXXLL motif) with RORA and RORC (via AF-2 motif); activates RORA and RORC transcriptional activation. Interacts with LRPPRC. Interacts with FOXO1. Interacts with NR5A2. Post-translationally, phosphorylation by AMPK in skeletal muscle increases activation of its own promoter. Phosphorylated by CLK2. In terms of processing, heavily acetylated by KAT2A/GCN5 under conditions of high nutrients, leading to inactivation of PPARGC1A. Deacetylated by SIRT1 in low nutrients/high NAD conditions, leading to its activation. Ubiquitinated. Ubiquitination by RNF34 induces proteasomal degradation. In terms of tissue distribution, heart, skeletal muscle, liver and kidney. Expressed at lower levels in brain and pancreas and at very low levels in the intestine and white adipose tissue. In skeletal muscle, levels were lower in obese than in lean subjects and fasting induced a 2-fold increase in levels in the skeletal muscle in obese subjects.

Its subcellular location is the nucleus. The protein resides in the PML body. It localises to the cytoplasm. Its function is as follows. Transcriptional coactivator for steroid receptors and nuclear receptors. Greatly increases the transcriptional activity of PPARG and thyroid hormone receptor on the uncoupling protein promoter. Can regulate key mitochondrial genes that contribute to the program of adaptive thermogenesis. Plays an essential role in metabolic reprogramming in response to dietary availability through coordination of the expression of a wide array of genes involved in glucose and fatty acid metabolism. Acts as a key regulator of gluconeogenesis: stimulates hepatic gluconeogenesis by increasing the expression of gluconeogenic enzymes, and acting together with FOXO1 to promote the fasting gluconeogenic program. Induces the expression of PERM1 in the skeletal muscle in an ESRRA-dependent manner. Also involved in the integration of the circadian rhythms and energy metabolism. Required for oscillatory expression of clock genes, such as BMAL1 and NR1D1, through the coactivation of RORA and RORC, and metabolic genes, such as PDK4 and PEPCK. The polypeptide is Peroxisome proliferator-activated receptor gamma coactivator 1-alpha (PPARGC1A) (Homo sapiens (Human)).